A 465-amino-acid polypeptide reads, in one-letter code: Ribulose bisphosphate carboxylase large chain (465 aa).

Residue Lys-4 is modified to N6,N6,N6-trimethyllysine. Residues Asn-113 and Thr-163 each contribute to the substrate site. Residue Lys-165 is the Proton acceptor of the active site. Substrate is bound at residue Lys-167. Residues Lys-191, Asp-193, and Glu-194 each coordinate Mg(2+). The residue at position 191 (Lys-191) is an N6-carboxylysine. The active-site Proton acceptor is the His-284. Substrate is bound by residues Arg-285, His-317, and Ser-369.

The protein belongs to the RuBisCO large chain family. Type I subfamily. Heterohexadecamer of 8 large chains and 8 small chains; disulfide-linked. The disulfide link is formed within the large subunit homodimers. Requires Mg(2+) as cofactor. Post-translationally, the disulfide bond which can form in the large chain dimeric partners within the hexadecamer appears to be associated with oxidative stress and protein turnover.

The protein resides in the plastid. It is found in the chloroplast. It carries out the reaction 2 (2R)-3-phosphoglycerate + 2 H(+) = D-ribulose 1,5-bisphosphate + CO2 + H2O. The catalysed reaction is D-ribulose 1,5-bisphosphate + O2 = 2-phosphoglycolate + (2R)-3-phosphoglycerate + 2 H(+). RuBisCO catalyzes two reactions: the carboxylation of D-ribulose 1,5-bisphosphate, the primary event in carbon dioxide fixation, as well as the oxidative fragmentation of the pentose substrate in the photorespiration process. Both reactions occur simultaneously and in competition at the same active site. This is Ribulose bisphosphate carboxylase large chain from Bauera rubioides (Dog rose).